The chain runs to 369 residues: Iron-sulfur cluster assembly SufBD family protein AF_2365 (369 aa).

The protein belongs to the iron-sulfur cluster assembly SufBD family.

In Archaeoglobus fulgidus (strain ATCC 49558 / DSM 4304 / JCM 9628 / NBRC 100126 / VC-16), this protein is Iron-sulfur cluster assembly SufBD family protein AF_2365.